The following is a 584-amino-acid chain: Keratin, type I cytoskeletal 10 (584 aa).

Residues 1-15 (MSVRYSSSKHYSSSR) show a composition bias toward low complexity. The disordered stretch occupies residues 1 to 24 (MSVRYSSSKHYSSSRSGGGGGGGG). The tract at residues 1–145 (MSVRYSSSKH…GGDGGLLSGN (145 aa)) is head. Phosphoserine is present on residues Ser14, Ser16, Ser42, Ser53, Ser56, and Ser170. Residues 146 to 181 (EKVTMQNLNDRLASYLDKVRALEESNYELEGKIKEW) are coil 1A. The IF rod domain occupies 146–460 (EKVTMQNLND…SLLEGEGSSG (315 aa)). A linker 1 region spans residues 182–202 (YEKHGNSHQGEPRDYSKYYKT). The segment at 203 to 294 (IDDLKNQILN…KNHEEEMKDL (92 aa)) is coil 1B. The tract at residues 295-317 (RNVSTGDVNVEMNAAPGVDLTQL) is linker 12. The coil 2 stretch occupies residues 318–456 (LNNMRSQYEQ…QTYRSLLEGE (139 aa)). The interval 453–584 (LEGEGSSGGG…GESSSKGPRY (132 aa)) is disordered. Gly residues predominate over residues 457 to 563 (GSSGGGGRGG…GGGYGGGSSS (107 aa)). A tail region spans residues 457–584 (GSSGGGGRGG…GESSSKGPRY (128 aa)). Low complexity predominate over residues 564 to 584 (GGHKSSSSGSVGESSSKGPRY).

This sequence belongs to the intermediate filament family. Heterotetramer of two type I and two type II keratins. Heterodimer with KRT1. Two heterodimers of KRT1 and KRT10 form a heterotetramer. The KRT10 subunit in the heterotetramer is probably disulfide-linked. Interacts with PLEC isoform 1C, when in a heterodimer with KRT1. In terms of assembly, (Microbial infection) Interacts (via C-terminal tail domain) with the S.aureus clumping factor, clfB; this interaction probably mediates S.aureus attachment to the keratinized squamous epithelial cells from the nasal cavity. As to quaternary structure, (Microbial infection) Interacts (via the C-terminal tail domain) with S.pneumoniae serine-rich repeat protein PsrP; this interaction probably mediates S.pneumoniae adherence to lung tissue and subsequent pathogenesis. Neither protein has to be glycosylated for the interaction to occur. Seen in all suprabasal cell layers including stratum corneum. Expressed on the surface of lung cell lines. Localized on the surface of desquamated nasal epithelial cells (at protein level).

The protein resides in the secreted. The protein localises to the extracellular space. It localises to the cell surface. It is found in the cytoplasm. Functionally, plays a role in the establishment of the epidermal barrier on plantar skin. Involved in the maintenance of cell layer development and keratin filament bundles in suprabasal cells of the epithelium. Its function is as follows. (Microbial infection) Acts as a mediator of S.aureus adherence to desquamated nasal epithelial cells via clfB, and hence may play a role in nasal colonization. (Microbial infection) Binds S.pneumoniae PsrP, mediating adherence of the bacteria to lung cell lines. Reduction of levels of KRT10 keratin decrease adherence, overexpression increases adherence. Neither protein has to be glycosylated for the interaction to occur. In Homo sapiens (Human), this protein is Keratin, type I cytoskeletal 10 (KRT10).